A 290-amino-acid chain; its full sequence is Short-chain dehydrogenase srdE (290 aa).

4 residues coordinate NADP(+): isoleucine 11, threonine 37, aspartate 58, and asparagine 86. Residues leucine 125–valine 145 traverse the membrane as a helical segment. Tyrosine 150 is an NADP(+) binding site. Tyrosine 150 acts as the Proton donor in catalysis. A glycan (N-linked (GlcNAc...) asparagine) is linked at asparagine 151. NADP(+)-binding residues include lysine 154, valine 183, and threonine 185. Residue lysine 154 is the Lowers pKa of active site Tyr of the active site.

It belongs to the short-chain dehydrogenases/reductases (SDR) family.

The protein localises to the membrane. In terms of biological role, short-chain dehydrogenase; part of the gene cluster that mediates the biosynthesis of sordarial, a salicylic aldehyde structurally related to the phytotoxin pyriculol. The most interesting aspect of this pathway is formation of an aromatic product from the highly reducing polyketide synthase srdA. SrdA synthesizes a reduced polyketide chain from one molecule of acetyl-CoA and five molecules of malonyl-CoA. The polyketide chain is then reductively released as an aldehyde. The oxidoreductases srdC, srdD and srdE then oxidize one of the hydroxy groups to facilitate the intramolecular aldol condensation, followed by dehydration to yield a salicylic aldehyde. This aldehyde can undergo facile reduction by endogenous reductases to yield the alcohol 1-hydroxy-2-hydroxymethyl-3-pent-1,3-dienylbenzene. The flavin-dependent srdI counteract against the propensity of the aldehydes to be reduced under physiological conditions and is responsible for reoxidizing 1-hydroxy-2-hydroxymethyl-3-pent-1,3-dienylbenzene back to the salicylic aldehyde. This salicylic aldehyde is then selectively epoxidized by the cupin-domain-containing oxidoreductase srdB to yield the epoxide, which can be hydrolyzed stereoselectively by the hydrolase srdG to give the final product sordarial. This chain is Short-chain dehydrogenase srdE, found in Neurospora crassa (strain ATCC 24698 / 74-OR23-1A / CBS 708.71 / DSM 1257 / FGSC 987).